Consider the following 455-residue polypeptide: Phosphoglucosamine mutase (455 aa).

Ser-108 acts as the Phosphoserine intermediate in catalysis. Positions 108, 246, 248, and 250 each coordinate Mg(2+). Ser-108 is modified (phosphoserine).

It belongs to the phosphohexose mutase family. Mg(2+) is required as a cofactor. Post-translationally, activated by phosphorylation.

It catalyses the reaction alpha-D-glucosamine 1-phosphate = D-glucosamine 6-phosphate. In terms of biological role, catalyzes the conversion of glucosamine-6-phosphate to glucosamine-1-phosphate. This chain is Phosphoglucosamine mutase, found in Frankia casuarinae (strain DSM 45818 / CECT 9043 / HFP020203 / CcI3).